We begin with the raw amino-acid sequence, 148 residues long: Transcriptional regulator MraZ (148 aa).

2 SpoVT-AbrB domains span residues 5–53 (ETAI…AEKE) and 82–125 (SAVL…SEQA).

Belongs to the MraZ family. As to quaternary structure, forms oligomers.

It is found in the cytoplasm. Its subcellular location is the nucleoid. This is Transcriptional regulator MraZ from Xanthomonas axonopodis pv. citri (strain 306).